Reading from the N-terminus, the 270-residue chain is Alpha N-terminal protein methyltransferase 1 (270 aa).

S-adenosyl-L-methionine-binding positions include G114, R119, 137–139 (EQN), 165–166 (LQ), and Q180.

Belongs to the methyltransferase superfamily. NTM1 family.

It catalyses the reaction N-terminal L-alanyl-L-prolyl-L-lysyl-[protein] + 3 S-adenosyl-L-methionine = N-terminal N,N,N-trimethyl-L-alanyl-L-prolyl-L-lysyl-[protein] + 3 S-adenosyl-L-homocysteine + 3 H(+). The enzyme catalyses N-terminal L-seryl-L-prolyl-L-lysyl-[protein] + 3 S-adenosyl-L-methionine = N-terminal N,N,N-trimethyl-L-seryl-L-prolyl-L-lysyl-[protein] + 3 S-adenosyl-L-homocysteine + 3 H(+). It carries out the reaction N-terminal L-prolyl-L-prolyl-L-lysyl-[protein] + 2 S-adenosyl-L-methionine = N-terminal N,N-dimethyl-L-prolyl-L-prolyl-L-lysyl-[protein] + 2 S-adenosyl-L-homocysteine + 2 H(+). Functionally, alpha-N-methyltransferase that methylates the N-terminus of target proteins containing the N-terminal motif [Ala/Pro/Ser]-Pro-Lys when the initiator Met is cleaved. Specifically catalyzes mono-, di- or tri-methylation of exposed alpha-amino group of Ala or Ser residue in the [Ala/Ser]-Pro-Lys motif and mono- or di-methylation of Pro in the Pro-Pro-Lys motif. This chain is Alpha N-terminal protein methyltransferase 1, found in Dictyostelium discoideum (Social amoeba).